Consider the following 28-residue polypeptide: KRGFLDVVKHIGKAALGAVTHLINQGEQ.

Q25 is modified (glutamine amide). The propeptide occupies E27–Q28.

As to expression, expressed by the skin glands.

The protein resides in the secreted. Functionally, has antimicrobial activity against Gram-negative bacterium E.coli (MIC=13.32 uM), against Gram-positive bacterium S.aureus (MIC=13.32 uM) and against fungus C.albicans (MIC=13.32 uM). At higher concentrations also has a bactericidal and fungicidal effect. Has hemagglutinating activity against horse erythrocytes. In Cruziohyla calcarifer (Splendid leaf frog), this protein is Cruzioseptin-3.